The chain runs to 70 residues: Beta-defensin 43 (70 aa).

A signal peptide spans Met-1–Ser-22. Cystine bridges form between Cys-29/Cys-57 and Cys-36/Cys-50.

Belongs to the beta-defensin family.

It is found in the secreted. In terms of biological role, has bactericidal activity. This Rattus norvegicus (Rat) protein is Beta-defensin 43 (Defb43).